The sequence spans 625 residues: Chaperone protein HtpG (625 aa).

The a; substrate-binding stretch occupies residues 1–339 (MNKQTLSFQA…SSDLPLNVSR (339 aa)). The segment at 340–557 (ELLQESRDVK…DGDISGHLAR (218 aa)) is b. Residues 558–625 (LLKQAGQSAP…YVQRVNRLLV (68 aa)) are c.

The protein belongs to the heat shock protein 90 family. Homodimer.

Its subcellular location is the cytoplasm. Its function is as follows. Molecular chaperone. Has ATPase activity. This chain is Chaperone protein HtpG, found in Methylibium petroleiphilum (strain ATCC BAA-1232 / LMG 22953 / PM1).